A 250-amino-acid chain; its full sequence is Proteasome subunit alpha (250 aa).

Belongs to the peptidase T1A family. As to quaternary structure, the 20S proteasome core is composed of 14 alpha and 14 beta subunits that assemble into four stacked heptameric rings, resulting in a barrel-shaped structure. The two inner rings, each composed of seven catalytic beta subunits, are sandwiched by two outer rings, each composed of seven alpha subunits. The catalytic chamber with the active sites is on the inside of the barrel. Has a gated structure, the ends of the cylinder being occluded by the N-termini of the alpha-subunits. Is capped at one or both ends by the proteasome regulatory ATPase, PAN.

It localises to the cytoplasm. The formation of the proteasomal ATPase PAN-20S proteasome complex, via the docking of the C-termini of PAN into the intersubunit pockets in the alpha-rings, triggers opening of the gate for substrate entry. Interconversion between the open-gate and close-gate conformations leads to a dynamic regulation of the 20S proteasome proteolysis activity. Functionally, component of the proteasome core, a large protease complex with broad specificity involved in protein degradation. This chain is Proteasome subunit alpha, found in Haloquadratum walsbyi (strain DSM 16790 / HBSQ001).